Reading from the N-terminus, the 238-residue chain is uncharacterized protein (238 aa).

This is an uncharacterized protein from Methanocaldococcus jannaschii (strain ATCC 43067 / DSM 2661 / JAL-1 / JCM 10045 / NBRC 100440) (Methanococcus jannaschii).